The sequence spans 186 residues: Peptidyl-tRNA hydrolase (186 aa).

Residue Y14 coordinates tRNA. The active-site Proton acceptor is H19. Y64, N66, and N112 together coordinate tRNA.

The protein belongs to the PTH family. In terms of assembly, monomer.

The protein resides in the cytoplasm. The enzyme catalyses an N-acyl-L-alpha-aminoacyl-tRNA + H2O = an N-acyl-L-amino acid + a tRNA + H(+). Its function is as follows. Hydrolyzes ribosome-free peptidyl-tRNAs (with 1 or more amino acids incorporated), which drop off the ribosome during protein synthesis, or as a result of ribosome stalling. Functionally, catalyzes the release of premature peptidyl moieties from peptidyl-tRNA molecules trapped in stalled 50S ribosomal subunits, and thus maintains levels of free tRNAs and 50S ribosomes. The chain is Peptidyl-tRNA hydrolase from Bacillus cereus (strain Q1).